Consider the following 241-residue polypeptide: GPI-anchored hemophore RBT5 (241 aa).

An N-terminal signal peptide occupies residues 1–20 (MLALSLLSIVSIASAAGVTA). A CFEM domain is found at 26–137 (NPYTIFPSVA…DALAKAADAA (112 aa)). Intrachain disulfides connect Cys-54–Cys-94, Cys-58–Cys-89, Cys-68–Cys-75, and Cys-77–Cys-110. Position 72 (Asp-72) interacts with heme. Low complexity-rich tracts occupy residues 140–154 (TTAE…AAET) and 163–182 (KETT…PAET). The interval 140-210 (TTAESTTAES…SVAQSSSSAA (71 aa)) is disordered. Positions 183–199 (SKAEETSKAAETTKAEE) are enriched in basic and acidic residues. Over residues 200 to 210 (SSVAQSSSSAA) the composition is skewed to low complexity. A lipid anchor (GPI-anchor amidated asparagine) is attached at Asn-221. The propeptide at 222–241 (AGNMPAVAIGGVIAAVAALF) is removed in mature form.

This sequence belongs to the RBT5 family. As to quaternary structure, interacts with PGA7. Post-translationally, the GPI-anchor is attached to the protein in the endoplasmic reticulum and serves to target the protein to the cell surface. There, the glucosamine-inositol phospholipid moiety is cleaved off and the GPI-modified mannoprotein is covalently attached via its lipidless GPI glycan remnant to the 1,6-beta-glucan of the outer cell wall layer. In terms of processing, mannosylated.

The protein localises to the secreted. It localises to the cell wall. The protein resides in the cell membrane. In terms of biological role, GPI-linked hyphal surface heme-binding protein involved in heme-iron utilization. Heme transfer occurs between PGA7, RBT5 and CSA2 supporting a model in which the 3 CFEM proteins cooperate in a heme-acquisition system and form a cross-cell wall heme-transfer cascade. The ability to acquire iron from host tissues is a major virulence factor of pathogenic microorganisms. Required for biofilm formation. The sequence is that of GPI-anchored hemophore RBT5 from Candida albicans (strain SC5314 / ATCC MYA-2876) (Yeast).